The following is a 161-amino-acid chain: DNA-binding protein inhibitor ID-4 (161 aa).

Positions 52 to 104 (AAEAAADEPALCLQCDMNDCYSRLRRLVPTIPPNKKVSKVEILQHVIDYILDL) constitute a bHLH domain. Pro residues predominate over residues 117–126 (QPPPPAPPHH). A disordered region spans residues 117–161 (QPPPPAPPHHPAGTCPAAPPRTPLTALNTDPAGAVNKQGDSILCR).

Heterodimer with other HLH proteins.

It is found in the nucleus. Functionally, transcriptional regulator (lacking a basic DNA binding domain) which negatively regulates the basic helix-loop-helix (bHLH) transcription factors by forming heterodimers and inhibiting their DNA binding and transcriptional activity. Implicated in regulating a variety of cellular processes, including cellular growth, senescence, differentiation, apoptosis, angiogenesis, and neoplastic transformation. This chain is DNA-binding protein inhibitor ID-4 (ID4), found in Homo sapiens (Human).